We begin with the raw amino-acid sequence, 656 residues long: Translation factor GUF1 homolog, mitochondrial (656 aa).

Positions 55-236 (QRIRNFSIIA…EIVRRLPPPD (182 aa)) constitute a tr-type G domain. GTP is bound by residues 64 to 71 (AHVDHGKS), 129 to 133 (DTPGH), and 183 to 186 (NKID).

The protein belongs to the TRAFAC class translation factor GTPase superfamily. Classic translation factor GTPase family. LepA subfamily.

It localises to the mitochondrion inner membrane. The catalysed reaction is GTP + H2O = GDP + phosphate + H(+). Promotes mitochondrial protein synthesis. May act as a fidelity factor of the translation reaction, by catalyzing a one-codon backward translocation of tRNAs on improperly translocated ribosomes. Binds to mitochondrial ribosomes in a GTP-dependent manner. This is Translation factor GUF1 homolog, mitochondrial from Aedes aegypti (Yellowfever mosquito).